The primary structure comprises 498 residues: ATP synthase subunit beta, chloroplastic (498 aa).

An ATP-binding site is contributed by 172-179 (GGAGVGKT).

The protein belongs to the ATPase alpha/beta chains family. F-type ATPases have 2 components, CF(1) - the catalytic core - and CF(0) - the membrane proton channel. CF(1) has five subunits: alpha(3), beta(3), gamma(1), delta(1), epsilon(1). CF(0) has four main subunits: a(1), b(1), b'(1) and c(9-12).

The protein resides in the plastid. It is found in the chloroplast thylakoid membrane. The catalysed reaction is ATP + H2O + 4 H(+)(in) = ADP + phosphate + 5 H(+)(out). Functionally, produces ATP from ADP in the presence of a proton gradient across the membrane. The catalytic sites are hosted primarily by the beta subunits. The sequence is that of ATP synthase subunit beta, chloroplastic from Platanus occidentalis (Sycamore).